The following is a 267-amino-acid chain: Thiamine pyrophosphokinase 2 (267 aa).

It belongs to the thiamine pyrophosphokinase family.

It localises to the cytoplasm. The protein resides in the cytosol. The catalysed reaction is thiamine + ATP = thiamine diphosphate + AMP + H(+). It participates in cofactor biosynthesis; thiamine diphosphate biosynthesis; thiamine diphosphate from thiamine: step 1/1. Catalyzes the phosphorylation of thiamine to thiamine pyrophosphate (TPP). TPP is an active cofactor for enzymes involved in glycolysis and energy production. Plant leaves require high levels of TPP for photosynthesis and carbohydrate metabolism. The sequence is that of Thiamine pyrophosphokinase 2 (TPK2) from Oryza sativa subsp. japonica (Rice).